A 711-amino-acid polypeptide reads, in one-letter code: Progesterone receptor (711 aa).

A modulating, Pro-Rich region spans residues 1–347 (MEDKSKQCLQ…YGFDALPRKI (347 aa)). 2 consecutive NR C4-type zinc fingers follow at residues 348–368 (CLIC…CGSC) and 384–408 (CAGR…LKKC). The segment at residues 348-420 (CLICSDEASG…AGMVLGGRKF (73 aa)) is a DNA-binding region (nuclear receptor). One can recognise an NR LBD domain in the interval 457-691 (QEVQYFPELL…EFPEMMTEVI (235 aa)).

It belongs to the nuclear hormone receptor family. NR3 subfamily. Expressed in all tissues examined: highly expressed in testis and brain. Also expressed in heart, lung, liver, kidney, stomach and small intestine.

The protein localises to the nucleus. Functionally, the steroid hormones and their receptors are involved in the regulation of eukaryotic gene expression and affect cellular proliferation and differentiation in target tissues. This is Progesterone receptor (pgr) from Rana dybowskii (Dybovsky's frog).